Here is a 440-residue protein sequence, read N- to C-terminus: Streptokinase G (440 aa).

The first 26 residues, 1-26, serve as a signal peptide directing secretion; it reads MKNYLSFGMFALLFALTFGTVNSVQA.

This protein is not a protease, but it activates plasminogen by complexing with it. As a potential virulence factor, it is thought to prevent the formation of effective fibrin barriers around the site of infection, thereby contributing to the invasiveness of the cells. The protein is Streptokinase G (skg) of Streptococcus sp. (strain 19909).